A 119-amino-acid chain; its full sequence is Ribonuclease P protein component (119 aa).

This sequence belongs to the RnpA family. Consists of a catalytic RNA component (M1 or rnpB) and a protein subunit.

The enzyme catalyses Endonucleolytic cleavage of RNA, removing 5'-extranucleotides from tRNA precursor.. In terms of biological role, RNaseP catalyzes the removal of the 5'-leader sequence from pre-tRNA to produce the mature 5'-terminus. It can also cleave other RNA substrates such as 4.5S RNA. The protein component plays an auxiliary but essential role in vivo by binding to the 5'-leader sequence and broadening the substrate specificity of the ribozyme. This Chlamydia muridarum (strain MoPn / Nigg) protein is Ribonuclease P protein component.